Here is a 601-residue protein sequence, read N- to C-terminus: Chaperone protein DnaK (601 aa).

The residue at position 175 (threonine 175) is a Phosphothreonine; by autocatalysis. The disordered stretch occupies residues 570 to 601 (FAQKAASKETSKNEQNEDGSIDAEIKEEDPKA). A compositionally biased stretch (basic and acidic residues) spans 575–584 (ASKETSKNEQ). The span at 585–601 (NEDGSIDAEIKEEDPKA) shows a compositional bias: acidic residues.

Belongs to the heat shock protein 70 family.

Functionally, acts as a chaperone. The protein is Chaperone protein DnaK of Mycoplasma mobile (strain ATCC 43663 / 163K / NCTC 11711) (Mesomycoplasma mobile).